Here is a 562-residue protein sequence, read N- to C-terminus: Cytosolic Fe-S cluster assembly factor nar1 (562 aa).

Cysteine 20 serves as a coordination point for [4Fe-4S] cluster. The disordered stretch occupies residues 28-47 (PKNESSNSQNPYEVTTEDKV). Residues 29 to 40 (KNESSNSQNPYE) are compositionally biased toward polar residues. [4Fe-4S] cluster is bound by residues cysteine 62, cysteine 65, cysteine 68, cysteine 214, and cysteine 269. The interval 439–462 (ARVPAASAGGNRRQPISRNSASAG) is disordered. Residues 452–462 (QPISRNSASAG) are compositionally biased toward polar residues. [4Fe-4S] cluster is bound by residues cysteine 475 and cysteine 479. Disordered regions lie at residues 492 to 513 (REAS…PTPH) and 541 to 562 (HSPS…IGLT). Over residues 494–505 (ASTSTQSVTAVE) the composition is skewed to polar residues.

It belongs to the NARF family.

Its function is as follows. Component of the cytosolic Fe/S protein assembly machinery. Required for maturation of extramitochondrial Fe/S proteins. May play a role in the transfer of pre-assembled Fe/S clusters to target apoproteins. The sequence is that of Cytosolic Fe-S cluster assembly factor nar1 (nar1) from Aspergillus flavus (strain ATCC 200026 / FGSC A1120 / IAM 13836 / NRRL 3357 / JCM 12722 / SRRC 167).